The sequence spans 186 residues: ATP-dependent protease subunit HslV (186 aa).

The active site involves T14. 3 residues coordinate Na(+): A168, C171, and T174.

The protein belongs to the peptidase T1B family. HslV subfamily. In terms of assembly, a double ring-shaped homohexamer of HslV is capped on each side by a ring-shaped HslU homohexamer. The assembly of the HslU/HslV complex is dependent on binding of ATP.

The protein localises to the cytoplasm. It carries out the reaction ATP-dependent cleavage of peptide bonds with broad specificity.. Its activity is regulated as follows. Allosterically activated by HslU binding. Functionally, protease subunit of a proteasome-like degradation complex believed to be a general protein degrading machinery. The sequence is that of ATP-dependent protease subunit HslV from Bradyrhizobium diazoefficiens (strain JCM 10833 / BCRC 13528 / IAM 13628 / NBRC 14792 / USDA 110).